Here is a 147-residue protein sequence, read N- to C-terminus: Secreted RxLR effector protein BLN04 (147 aa).

The first 23 residues, 1-23 (MATMRRICFLFVFNLAVATSTQG), serve as a signal peptide directing secretion. The short motif at 58–61 (SEER) is the dEER element. The chain crosses the membrane as a helical span at residues 117-137 (VYIYTILFLSIPIILGVAMYI).

This sequence belongs to the RxLR effector family. In terms of assembly, interacts with host transcription factor NAC069.

The protein resides in the secreted. The protein localises to the host membrane. Secreted effector that inhibits stress-induced relocalization of the transcription factor NAC069 to the nucleus, thus affecting its broad role in abiotic and biotic stress responses. In Bremia lactucae (Lettuce downy mildew), this protein is Secreted RxLR effector protein BLN04.